Reading from the N-terminus, the 224-residue chain is Ras-related protein Rab-11C (224 aa).

17–24 (GDSAVGKS) is a binding site for GTP. An Effector region motif is present at residues 39–47 (TKATIGVDF). Residues 65–69 (DTAGQ) and 123–126 (NKSD) contribute to the GTP site. Residues 194–224 (QGKKLTPLSDPAPQLTANTTSTHQEKKSGCC) are disordered. Residues C223 and C224 are each lipidated (S-geranylgeranyl cysteine).

This sequence belongs to the small GTPase superfamily. Rab family.

It is found in the membrane. The chain is Ras-related protein Rab-11C (rab11C) from Dictyostelium discoideum (Social amoeba).